The chain runs to 1316 residues: DNA-directed RNA polymerase subunit beta' (1316 aa).

4 residues coordinate Zn(2+): Cys-60, Cys-62, Cys-75, and Cys-78. Asp-535, Asp-537, and Asp-539 together coordinate Mg(2+). Residues Cys-891, Cys-968, Cys-975, and Cys-978 each coordinate Zn(2+).

This sequence belongs to the RNA polymerase beta' chain family. In terms of assembly, the RNAP catalytic core consists of 2 alpha, 1 beta, 1 beta' and 1 omega subunit. When a sigma factor is associated with the core the holoenzyme is formed, which can initiate transcription. The cofactor is Mg(2+). It depends on Zn(2+) as a cofactor.

The catalysed reaction is RNA(n) + a ribonucleoside 5'-triphosphate = RNA(n+1) + diphosphate. Its function is as follows. DNA-dependent RNA polymerase catalyzes the transcription of DNA into RNA using the four ribonucleoside triphosphates as substrates. The polypeptide is DNA-directed RNA polymerase subunit beta' (Mycobacterium leprae (strain Br4923)).